The following is a 93-amino-acid chain: Alpha-defensin 7 (93 aa).

The N-terminal stretch at 1–19 (MKTLILLSALVLLAFQVQA) is a signal peptide. A propeptide spanning residues 20–58 (DPIQNTDEETKTEEQPGEDDQAVSVSFGDPEGSSLQEES) is cleaved from the precursor. Residues 22–56 (IQNTDEETKTEEQPGEDDQAVSVSFGDPEGSSLQE) form a disordered region. Intrachain disulfides connect cysteine 64–cysteine 92, cysteine 66–cysteine 81, and cysteine 71–cysteine 91.

It belongs to the alpha-defensin family. As to expression, paneth cells of the small bowel.

It is found in the secreted. In terms of biological role, probably contributes to the antimicrobial barrier function of the small bowel mucosa. This chain is Alpha-defensin 7 (Defa7), found in Mus musculus (Mouse).